The primary structure comprises 581 residues: Urease subunit alpha (581 aa).

The region spanning 134-581 is the Urease domain; that stretch reads GGFDSHIHFI…LPMTQRYFLF (448 aa). The Ni(2+) site is built by H139, H141, and K222. K222 is subject to N6-carboxylysine. H224 is a binding site for substrate. Ni(2+)-binding residues include H251 and H277. The active-site Proton donor is the H325. Residue D365 coordinates Ni(2+).

This sequence belongs to the metallo-dependent hydrolases superfamily. Urease alpha subunit family. In terms of assembly, heterotrimer of UreA (gamma), UreB (beta) and UreC (alpha) subunits. Three heterotrimers associate to form the active enzyme. Ni cation is required as a cofactor. Post-translationally, carboxylation allows a single lysine to coordinate two nickel ions.

It is found in the cytoplasm. The enzyme catalyses urea + 2 H2O + H(+) = hydrogencarbonate + 2 NH4(+). It participates in nitrogen metabolism; urea degradation; CO(2) and NH(3) from urea (urease route): step 1/1. The sequence is that of Urease subunit alpha from Albidiferax ferrireducens (strain ATCC BAA-621 / DSM 15236 / T118) (Rhodoferax ferrireducens).